Consider the following 587-residue polypeptide: Aspartate--tRNA(Asp/Asn) ligase (587 aa).

Position 173 (Glu-173) interacts with L-aspartate. Residues 197–200 (QLFK) are aspartate. Residue Arg-219 coordinates L-aspartate. ATP-binding positions include 219 to 221 (RDE) and Gln-228. His-448 is a binding site for L-aspartate. Glu-481 lines the ATP pocket. Arg-488 contributes to the L-aspartate binding site. Residue 533–536 (GLDR) coordinates ATP.

This sequence belongs to the class-II aminoacyl-tRNA synthetase family. Type 1 subfamily. As to quaternary structure, homodimer.

Its subcellular location is the cytoplasm. It catalyses the reaction tRNA(Asx) + L-aspartate + ATP = L-aspartyl-tRNA(Asx) + AMP + diphosphate. Functionally, aspartyl-tRNA synthetase with relaxed tRNA specificity since it is able to aspartylate not only its cognate tRNA(Asp) but also tRNA(Asn). Reaction proceeds in two steps: L-aspartate is first activated by ATP to form Asp-AMP and then transferred to the acceptor end of tRNA(Asp/Asn). The protein is Aspartate--tRNA(Asp/Asn) ligase of Alcanivorax borkumensis (strain ATCC 700651 / DSM 11573 / NCIMB 13689 / SK2).